A 336-amino-acid polypeptide reads, in one-letter code: Shematrin-like protein 1 (336 aa).

An N-terminal signal peptide occupies residues 1-16 (MLRFIAIVALIATVNA).

As to expression, prismatic layer of shell (at protein level). Expressed primarily in the mantle with highest level in the mantle edge and lower level in the mantle pallium.

Its subcellular location is the secreted. The polypeptide is Shematrin-like protein 1 (Pinctada maxima (Silver-lipped pearl oyster)).